We begin with the raw amino-acid sequence, 193 residues long: Potassium-transporting ATPase KdpC subunit (193 aa).

The helical transmembrane segment at 14 to 34 (ITFTFLVLCGLVYPLIVTGIA) threads the bilayer.

This sequence belongs to the KdpC family. The system is composed of three essential subunits: KdpA, KdpB and KdpC.

It is found in the cell membrane. Part of the high-affinity ATP-driven potassium transport (or Kdp) system, which catalyzes the hydrolysis of ATP coupled with the electrogenic transport of potassium into the cytoplasm. This subunit acts as a catalytic chaperone that increases the ATP-binding affinity of the ATP-hydrolyzing subunit KdpB by the formation of a transient KdpB/KdpC/ATP ternary complex. This chain is Potassium-transporting ATPase KdpC subunit, found in Bacillus mycoides (strain KBAB4) (Bacillus weihenstephanensis).